The sequence spans 311 residues: Ribosomal protein L11 methyltransferase (311 aa).

4 residues coordinate S-adenosyl-L-methionine: Thr-162, Gly-183, Asp-205, and Asn-248.

This sequence belongs to the methyltransferase superfamily. PrmA family.

It localises to the cytoplasm. It catalyses the reaction L-lysyl-[protein] + 3 S-adenosyl-L-methionine = N(6),N(6),N(6)-trimethyl-L-lysyl-[protein] + 3 S-adenosyl-L-homocysteine + 3 H(+). Methylates ribosomal protein L11. This is Ribosomal protein L11 methyltransferase from Bacillus licheniformis (strain ATCC 14580 / DSM 13 / JCM 2505 / CCUG 7422 / NBRC 12200 / NCIMB 9375 / NCTC 10341 / NRRL NRS-1264 / Gibson 46).